The following is a 406-amino-acid chain: Protein PHYTOCHROME KINASE SUBSTRATE 4 (406 aa).

Residues 106 to 119 (SWNSQTGLLSNKNR) show a composition bias toward polar residues. The segment at 106–133 (SWNSQTGLLSNKNRQGSDRDGRRSSKKG) is disordered.

Belongs to the PKS family. Interacts in vitro with PHYA and PHYB. In terms of tissue distribution, expressed in the hypocotyl elongation zone. Not found in the root elongation zone.

Modulates phytochrome-mediated control of hypocotyl growth orientation. Involved in PHYA and PHYB signaling. Acts as an inhibitor of asymmetric growth. Not involved in the control of leaf flattening. In Arabidopsis thaliana (Mouse-ear cress), this protein is Protein PHYTOCHROME KINASE SUBSTRATE 4 (PKS4).